A 448-amino-acid chain; its full sequence is Keratin, type I cytoskeletal 27 (448 aa).

The tract at residues 1 to 73 (MSVRFSSASR…ANEHGLLSGN (73 aa)) is head. A coil 1A region spans residues 74–109 (EKVTMQNLNDRLASYLENVQALEEANADLEQKIKDW). The IF rod domain occupies 74–389 (EKVTMQNLND…RLIDGDEGSC (316 aa)). Residues 110-131 (YEKFGPGSCRGLDHDYSRYFPI) form a linker 1 region. Positions 132 to 223 (IDDLRTQIIS…KNHEEEMQAL (92 aa)) are coil 1B. A linker 12 region spans residues 224-246 (QCAAGGNVNVEMNAAPGVDLTVL). Positions 247–385 (LNNMRAEYEA…ETYCRLIDGD (139 aa)) are coil 2. The tail stretch occupies residues 386–448 (EGSCVKAKGQ…VNKTEQRIPS (63 aa)). A disordered region spans residues 427 to 448 (SRVHTLEEKSTKVNKTEQRIPS). Positions 430–448 (HTLEEKSTKVNKTEQRIPS) are enriched in basic and acidic residues.

This sequence belongs to the intermediate filament family. As to quaternary structure, heterotetramer of two type I and two type II keratins. Interacts with KRT6A to form filaments. In terms of tissue distribution, expressed in skin. Expressed in the Henle layer and cuticle of the irs in hair follicle bulb. In the hair follicle, expression was observed in all layers of the irs but was stronger in the Henle layer and cuticle than the Huxley layer until the Henle layer differentiated (at protein level).

The protein localises to the cytoplasm. Its function is as follows. Essential for the proper assembly of type I and type II keratin protein complexes and formation of keratin intermediate filaments in the inner root sheath (irs). The protein is Keratin, type I cytoskeletal 27 of Mus musculus (Mouse).